The following is a 342-amino-acid chain: Ketol-acid reductoisomerase (NADP(+)) (342 aa).

One can recognise a KARI N-terminal Rossmann domain in the interval 2 to 182 (AELFYDDDAD…GGLRAAGIKT (181 aa)). Residues 25 to 28 (YGSQ), R48, S51, S53, and 83 to 86 (DQHQ) contribute to the NADP(+) site. The active site involves H108. NADP(+) is bound at residue G134. Positions 183–328 (TFTEETETDL…RELRKLFAWV (146 aa)) constitute a KARI C-terminal knotted domain. Mg(2+)-binding residues include D191, E195, E227, and E231. S252 serves as a coordination point for substrate.

Belongs to the ketol-acid reductoisomerase family. The cofactor is Mg(2+).

It catalyses the reaction (2R)-2,3-dihydroxy-3-methylbutanoate + NADP(+) = (2S)-2-acetolactate + NADPH + H(+). The catalysed reaction is (2R,3R)-2,3-dihydroxy-3-methylpentanoate + NADP(+) = (S)-2-ethyl-2-hydroxy-3-oxobutanoate + NADPH + H(+). It functions in the pathway amino-acid biosynthesis; L-isoleucine biosynthesis; L-isoleucine from 2-oxobutanoate: step 2/4. The protein operates within amino-acid biosynthesis; L-valine biosynthesis; L-valine from pyruvate: step 2/4. In terms of biological role, involved in the biosynthesis of branched-chain amino acids (BCAA). Catalyzes an alkyl-migration followed by a ketol-acid reduction of (S)-2-acetolactate (S2AL) to yield (R)-2,3-dihydroxy-isovalerate. In the isomerase reaction, S2AL is rearranged via a Mg-dependent methyl migration to produce 3-hydroxy-3-methyl-2-ketobutyrate (HMKB). In the reductase reaction, this 2-ketoacid undergoes a metal-dependent reduction by NADPH to yield (R)-2,3-dihydroxy-isovalerate. The polypeptide is Ketol-acid reductoisomerase (NADP(+)) (Beutenbergia cavernae (strain ATCC BAA-8 / DSM 12333 / CCUG 43141 / JCM 11478 / NBRC 16432 / NCIMB 13614 / HKI 0122)).